We begin with the raw amino-acid sequence, 283 residues long: Diaminopimelate epimerase (283 aa).

2 residues coordinate substrate: N13 and N66. C75 serves as the catalytic Proton donor. Residues 76–77 (GN), N165, N198, and 216–217 (ER) each bind substrate. C225 functions as the Proton acceptor in the catalytic mechanism. Residue 226–227 (GT) coordinates substrate.

Belongs to the diaminopimelate epimerase family. As to quaternary structure, homodimer.

The protein resides in the cytoplasm. It carries out the reaction (2S,6S)-2,6-diaminopimelate = meso-2,6-diaminopimelate. It functions in the pathway amino-acid biosynthesis; L-lysine biosynthesis via DAP pathway; DL-2,6-diaminopimelate from LL-2,6-diaminopimelate: step 1/1. Catalyzes the stereoinversion of LL-2,6-diaminopimelate (L,L-DAP) to meso-diaminopimelate (meso-DAP), a precursor of L-lysine and an essential component of the bacterial peptidoglycan. The chain is Diaminopimelate epimerase from Acaryochloris marina (strain MBIC 11017).